The following is a 213-amino-acid chain: Adenylate kinase (213 aa).

Residue 10–15 coordinates ATP; it reads GAGKGT. The NMP stretch occupies residues 30-59; sequence AVGDIFRTIIKTSTSEAELINNYVKQGALI. AMP-binding positions include Arg36, 57–59, 85–88, and Gln92; these read ALI and GYPR. An LID region spans residues 123 to 161; the sequence is GRYSCKNCGKIYNIHFLQPKIEHVCDVCSSSVFDYRKDD. Arg124 contacts ATP. 2 residues coordinate Zn(2+): Cys127 and Cys130. 133–134 is a binding site for ATP; it reads IY. The Zn(2+) site is built by Cys147 and Cys150. Residues Arg158 and Arg169 each coordinate AMP. Lys197 is an ATP binding site.

It belongs to the adenylate kinase family. In terms of assembly, monomer.

The protein resides in the cytoplasm. The enzyme catalyses AMP + ATP = 2 ADP. It functions in the pathway purine metabolism; AMP biosynthesis via salvage pathway; AMP from ADP: step 1/1. Catalyzes the reversible transfer of the terminal phosphate group between ATP and AMP. Plays an important role in cellular energy homeostasis and in adenine nucleotide metabolism. This is Adenylate kinase from Rickettsia prowazekii (strain Madrid E).